Reading from the N-terminus, the 92-residue chain is C-C motif chemokine 4 (92 aa).

Residues Met1–Ser23 form the signal peptide. Cystine bridges form between Cys34/Cys58 and Cys35/Cys74.

It belongs to the intercrine beta (chemokine CC) family. Homodimer. Interacts with CCR5.

The protein localises to the secreted. Functionally, monokine with inflammatory and chemokinetic properties. In Bos taurus (Bovine), this protein is C-C motif chemokine 4 (CCL4).